Consider the following 517-residue polypeptide: Putative transporter C543.05c (517 aa).

11 helical membrane-spanning segments follow: residues 68-88, 93-113, 121-141, 155-175, 186-206, 217-237, 269-289, 311-331, 377-397, 403-423, and 449-471; these read SFGV…FALL, LCIV…YDIM, FPFL…IAIA, CEIF…QVLC, FLSI…DTVG, ILLL…FQHI, IPVG…ILFY, GFHW…ILGI, SNFI…LLVL, CVLA…NGIT, and RVVW…ITQV.

This sequence belongs to the anion exchanger (TC 2.A.31) family.

The protein resides in the vacuole membrane. The sequence is that of Putative transporter C543.05c from Schizosaccharomyces pombe (strain 972 / ATCC 24843) (Fission yeast).